The primary structure comprises 173 residues: Enhancer of split mdelta protein (173 aa).

One can recognise a bHLH domain in the interval 15-72 (YRKVTKPLLERKRRARMNLYLDELKDLIVDTMDAQGEQVSKLEKADILELTVNYLKAQ). An Orange domain is found at 93–126 (FRAGYTQAAYEVSHIFSTVPGLDLKFGTHLMKQL). A disordered region spans residues 147-173 (VNLADQKRSKSPREEDIHHGEEVWRPW). Basic and acidic residues predominate over residues 151 to 173 (DQKRSKSPREEDIHHGEEVWRPW). Residues 170-173 (WRPW) carry the WRPW motif motif.

As to quaternary structure, transcription repression requires formation of a complex with a corepressor protein (Groucho).

The protein localises to the nucleus. Its function is as follows. Transcriptional repressor of genes that require a bHLH protein for their transcription. May serve as a transcriptional regulator of the Achaete-scute complex (AS-C) genes. Contributes to the neural-epidermal lineage decision during early neurogenesis. As part of the Notch signaling pathway, required to maintain the self-renewal and identity of type II neuroblasts by regulating the expression of the transcriptional repressor erm. This Drosophila melanogaster (Fruit fly) protein is Enhancer of split mdelta protein.